Here is a 35-residue protein sequence, read N- to C-terminus: Fatty acid synthase (35 aa).

Ser12 is an active-site residue.

Homodimer which is arranged in a head to tail fashion. Interacts with CEACAM1; this interaction is insulin and phosphorylation-dependent; reduces fatty-acid synthase activity.

The protein localises to the cytoplasm. Its subcellular location is the melanosome. It catalyses the reaction acetyl-CoA + n malonyl-CoA + 2n NADPH + 2n H(+) = a long-chain fatty acid + (n+1) CoA + n CO2 + 2n NADP(+).. Fatty acid synthetase catalyzes the formation of long-chain fatty acids from acetyl-CoA, malonyl-CoA and NADPH. This multifunctional protein has 7 catalytic activities as an acyl carrier protein. Functionally, this fragment is from the acyltransferase domain of the fatty acid synthetase. This is Fatty acid synthase (FASN) from Capra hircus (Goat).